The chain runs to 237 residues: GCN5-related N-acetyltransferase 3, chloroplastic (237 aa).

Residues 1–93 constitute a chloroplast transit peptide; that stretch reads MGLVGCVGKS…RAISRSDVIV (93 aa). Residues 94–237 form the N-acetyltransferase domain; it reads SVFCKPQHVD…TMMFTKSLEA (144 aa). Residues 171 to 173, 179 to 184, 207 to 209, and phenylalanine 214 contribute to the acetyl-CoA site; these read LMV, RMGIGK, and FED.

The protein belongs to the acetyltransferase family. GNAT subfamily. Oligomer. Post-translationally, autoacetylated. Expressed in green tissues.

Its subcellular location is the plastid. The protein localises to the chloroplast. It catalyses the reaction an N-terminal L-alpha-aminoacyl-[protein] + acetyl-CoA = N-terminal N(alpha)-acetyl-L-alpha-aminoacyl-[protein] + CoA + H(+). The catalysed reaction is L-lysyl-[protein] + acetyl-CoA = N(6)-acetyl-L-lysyl-[protein] + CoA + H(+). Protein acetyltransferase with dual specificity triggering both N-alpha-acetylation (NTA) and epsilon-lysine acetylation (KA), possibly with a low efficiency or toward specific plastid substrates. The sequence is that of GCN5-related N-acetyltransferase 3, chloroplastic from Arabidopsis thaliana (Mouse-ear cress).